The primary structure comprises 538 residues: Atos homolog protein B (538 aa).

Disordered stretches follow at residues 1-103, 130-149, 163-185, and 199-272; these read MRHV…GLVS, GSATSSWTSGTQSTPWPSSN, PDQGGQGCLGESPGPAPSGQLHT, and KSPV…LGCP. The segment covering 130 to 148 has biased composition (low complexity); that stretch reads GSATSSWTSGTQSTPWPSS. Residues 227–238 show a composition bias toward pro residues; it reads HTPPGPGPPGPC. 2 positions are modified to phosphoserine: serine 254 and serine 255. The interval 348–430 is required for macropage invasion; sequence LLGNFEESLL…VPKVGTIQVT (83 aa). Positions 436–444 are transactivation domain 1 (TAD1); sequence QTVVKMFLV.

The protein belongs to the ATOS family.

The protein localises to the nucleus. Its function is as follows. Transcription regulator that may syncronize transcriptional and translational programs. This Rattus norvegicus (Rat) protein is Atos homolog protein B.